A 505-amino-acid chain; its full sequence is Amidophosphoribosyltransferase (505 aa).

The active-site Nucleophile is C2. Positions 2 to 236 (CGIVGIAGVM…PGEAIYITEE (235 aa)) constitute a Glutamine amidotransferase type-2 domain. The Mg(2+) site is built by T305, D367, and D368.

The protein in the C-terminal section; belongs to the purine/pyrimidine phosphoribosyltransferase family. As to quaternary structure, homotetramer. Requires Mg(2+) as cofactor.

The enzyme catalyses 5-phospho-beta-D-ribosylamine + L-glutamate + diphosphate = 5-phospho-alpha-D-ribose 1-diphosphate + L-glutamine + H2O. It participates in purine metabolism; IMP biosynthesis via de novo pathway; N(1)-(5-phospho-D-ribosyl)glycinamide from 5-phospho-alpha-D-ribose 1-diphosphate: step 1/2. Its activity is regulated as follows. Inhibited by iodoacetamide and by the glutamine analogs chloroketone and DON. Catalyzes the formation of phosphoribosylamine from phosphoribosylpyrophosphate (PRPP) and glutamine. Can also use NH(3) in place of glutamine. The protein is Amidophosphoribosyltransferase of Escherichia coli (strain K12).